A 431-amino-acid polypeptide reads, in one-letter code: Enolase (431 aa).

A (2R)-2-phosphoglycerate-binding site is contributed by Gln-167. The active-site Proton donor is Glu-209. Asp-246, Glu-289, and Asp-316 together coordinate Mg(2+). Residues Lys-341, Arg-370, Ser-371, and Lys-392 each contribute to the (2R)-2-phosphoglycerate site. Lys-341 acts as the Proton acceptor in catalysis.

The protein belongs to the enolase family. Component of the RNA degradosome, a multiprotein complex involved in RNA processing and mRNA degradation. Requires Mg(2+) as cofactor.

The protein localises to the cytoplasm. It localises to the secreted. The protein resides in the cell surface. It catalyses the reaction (2R)-2-phosphoglycerate = phosphoenolpyruvate + H2O. It functions in the pathway carbohydrate degradation; glycolysis; pyruvate from D-glyceraldehyde 3-phosphate: step 4/5. Its function is as follows. Catalyzes the reversible conversion of 2-phosphoglycerate (2-PG) into phosphoenolpyruvate (PEP). It is essential for the degradation of carbohydrates via glycolysis. In Shewanella baltica (strain OS223), this protein is Enolase.